Consider the following 407-residue polypeptide: CCCH-type zinc finger protein oma-1 (407 aa).

The disordered stretch occupies residues 1-39; that stretch reads MNVNGENNEKIDEHHLESSLAGVPTLPVSPLDHAKDLSQ. Residues 7–17 show a composition bias toward basic and acidic residues; it reads NNEKIDEHHLE. The required for taf-4 binding stretch occupies residues 46 to 80; the sequence is IGDLVTQTANLIAIKKQLLEDIAFNQHIQSMQVRA. 2 C3H1-type zinc fingers span residues 112-140 and 154-182; these read SYKT…HGEE and KYKT…HPDH. At Thr-239 the chain carries Phosphothreonine; by mbk-2 and GSK3. Ser-302 is modified (phosphoserine; by mbk-2). Thr-339 is subject to Phosphothreonine; by GSK3.

As to quaternary structure, interacts with taf-4 (via C-terminus). Interacts with ifet-1. Component of a ribonucleoprotein particle complex that interacts with cgh-1 and car-1 in an RNA-dependent manner. Association with many proteins is dependent on the presence of RNA. Phosphorylation by mbk-2 and by gsk-3 are required for its rapid degradation following meiosis II. As to expression, exclusively expressed in the hermaphrodite gonad. Expressed prior to oocyte division. Widely distributed throughout gonadal oocytes from the mitotic stage to the developing diakinesis stage. Expressed in sperm.

The protein localises to the cytoplasm. The protein resides in the cytoplasmic granule. Its subcellular location is the nucleus. In terms of biological role, zinc-finger RNA-binding protein that binds to 5'-UA[AU]-3' motifs in the 3'-UTR of maternal mRNAs to suppress translation in oocytes and embryos. Acts as a ribonucleoprotein particle component that may exert part of its function within cytoplasmic foci of unfertilized oocytes. Acts redundantly with oma-2 to control the temporal expression and distribution of maternal proteins and thereby promote meiotic progression, oocyte maturation, fertilization and embryonic development. Recruits the translational repressor ifet-1 to the 3'-UTR of mei-1 and zif-1 to negatively regulate their translation. By suppressing the translation of the E3 ligase zif-1, may in turn play a role in the stabilization of zif-1 targets such as the maternal transcriptional repressor protein pie-1. Following fertilization, sequesters the transcription initiation factor, taf-4, in the cytoplasm, which prevents its nuclear localization and thus allows for transcriptional suppression in early embryos, but not in oocytes. Also, together with oma-2, is involved in P-granule distribution during embryonic development. The chain is CCCH-type zinc finger protein oma-1 from Caenorhabditis elegans.